The primary structure comprises 371 residues: GTPase Obg (371 aa).

The 159-residue stretch at 1–159 (MKFLDQAKVY…KTIWLRLKLI (159 aa)) folds into the Obg domain. Residues 160 to 327 (ADAGLVGLPN…VLRALRDIIV (168 aa)) enclose the OBG-type G domain. GTP contacts are provided by residues 166–173 (GLPNAGKS), 191–195 (FTTLH), 212–215 (DIPG), 279–282 (SQID), and 308–310 (SAI). Ser-173 and Thr-193 together coordinate Mg(2+). Residues 337 to 371 (APMKALKVRHRDMQSSGNEGESEDNSDRDDEEQQG) are disordered. Acidic residues predominate over residues 356 to 371 (GESEDNSDRDDEEQQG).

The protein belongs to the TRAFAC class OBG-HflX-like GTPase superfamily. OBG GTPase family. In terms of assembly, monomer. Mg(2+) is required as a cofactor.

It localises to the cytoplasm. Functionally, an essential GTPase which binds GTP, GDP and possibly (p)ppGpp with moderate affinity, with high nucleotide exchange rates and a fairly low GTP hydrolysis rate. Plays a role in control of the cell cycle, stress response, ribosome biogenesis and in those bacteria that undergo differentiation, in morphogenesis control. The polypeptide is GTPase Obg (Rhizobium rhizogenes (strain K84 / ATCC BAA-868) (Agrobacterium radiobacter)).